A 466-amino-acid chain; its full sequence is GTPase Der (466 aa).

2 consecutive EngA-type G domains span residues 3–167 and 176–350; these read PTLV…PDEP and PKIA…GAAM. Residues 9 to 16, 56 to 60, 119 to 122, 182 to 189, 229 to 233, and 294 to 297 contribute to the GTP site; these read GRSNVGKS, DTGGF, NKTE, GRPNVGKS, DTAGL, and NKWD. The KH-like domain maps to 351–435; it reads AHLPTPRLTR…PLRIEFRTGR (85 aa). The tract at residues 433–466 is disordered; the sequence is TGRNPYAGKSPAPLTEAEAKRAHRRRRYGRKKYG. Residues 453 to 466 show a composition bias toward basic residues; sequence RAHRRRRYGRKKYG.

It belongs to the TRAFAC class TrmE-Era-EngA-EngB-Septin-like GTPase superfamily. EngA (Der) GTPase family. As to quaternary structure, associates with the 50S ribosomal subunit.

Functionally, GTPase that plays an essential role in the late steps of ribosome biogenesis. This is GTPase Der from Nitrosospira multiformis (strain ATCC 25196 / NCIMB 11849 / C 71).